A 262-amino-acid polypeptide reads, in one-letter code: Pyridoxine 5'-phosphate synthase (262 aa).

Asn6 lines the 3-amino-2-oxopropyl phosphate pocket. 8–9 (DH) is a binding site for 1-deoxy-D-xylulose 5-phosphate. A 3-amino-2-oxopropyl phosphate-binding site is contributed by Arg17. His43 functions as the Proton acceptor in the catalytic mechanism. 2 residues coordinate 1-deoxy-D-xylulose 5-phosphate: Arg45 and His50. The active-site Proton acceptor is the Glu70. Thr102 serves as a coordination point for 1-deoxy-D-xylulose 5-phosphate. Catalysis depends on His215, which acts as the Proton donor. 3-amino-2-oxopropyl phosphate is bound by residues Gly216 and 237 to 238 (GH).

This sequence belongs to the PNP synthase family. As to quaternary structure, homooctamer; tetramer of dimers.

The protein resides in the cytoplasm. The enzyme catalyses 3-amino-2-oxopropyl phosphate + 1-deoxy-D-xylulose 5-phosphate = pyridoxine 5'-phosphate + phosphate + 2 H2O + H(+). The protein operates within cofactor biosynthesis; pyridoxine 5'-phosphate biosynthesis; pyridoxine 5'-phosphate from D-erythrose 4-phosphate: step 5/5. Its function is as follows. Catalyzes the complicated ring closure reaction between the two acyclic compounds 1-deoxy-D-xylulose-5-phosphate (DXP) and 3-amino-2-oxopropyl phosphate (1-amino-acetone-3-phosphate or AAP) to form pyridoxine 5'-phosphate (PNP) and inorganic phosphate. This chain is Pyridoxine 5'-phosphate synthase, found in Helicobacter pylori (strain J99 / ATCC 700824) (Campylobacter pylori J99).